The sequence spans 383 residues: Pantothenate kinase 1 (383 aa).

It belongs to the type II pantothenate kinase family. Highly expressed in leaves and developing seeds. Expressed in roots, stems and flowers.

It carries out the reaction (R)-pantothenate + ATP = (R)-4'-phosphopantothenate + ADP + H(+). The protein operates within cofactor biosynthesis; coenzyme A biosynthesis; CoA from (R)-pantothenate: step 1/5. Regulated by feedback inhibition by malonyl-CoA. In terms of biological role, catalyzes the phosphorylation of pantothenate the first step in CoA biosynthesis. May play a role in the physiological regulation of the intracellular CoA concentration. Functionally redudant with PANK2. The chain is Pantothenate kinase 1 (PANK1) from Arabidopsis thaliana (Mouse-ear cress).